Reading from the N-terminus, the 220-residue chain is Deoxyribose-phosphate aldolase (220 aa).

The active-site Proton donor/acceptor is aspartate 89. Residue lysine 151 is the Schiff-base intermediate with acetaldehyde of the active site. Lysine 180 serves as the catalytic Proton donor/acceptor.

Belongs to the DeoC/FbaB aldolase family. DeoC type 1 subfamily.

It is found in the cytoplasm. It catalyses the reaction 2-deoxy-D-ribose 5-phosphate = D-glyceraldehyde 3-phosphate + acetaldehyde. It functions in the pathway carbohydrate degradation; 2-deoxy-D-ribose 1-phosphate degradation; D-glyceraldehyde 3-phosphate and acetaldehyde from 2-deoxy-alpha-D-ribose 1-phosphate: step 2/2. Functionally, catalyzes a reversible aldol reaction between acetaldehyde and D-glyceraldehyde 3-phosphate to generate 2-deoxy-D-ribose 5-phosphate. The protein is Deoxyribose-phosphate aldolase of Streptococcus suis (strain 98HAH33).